A 184-amino-acid chain; its full sequence is MPAMEKLAGNFFLVGLMGAGKTTVGRALARRTGKTFYDSDQEIEARTGVRVATIFDIEGEMRFRNREACVIRDLAQQRDIVLATGGGAVLREENRKVLASHGTVIYLRASIDDLLARTQHDKNRPLLQIADPRAKLESLFNERDPFYREIADIIIDTTQQNVNLLVGRLVDQLLDSPHHPKETD.

Position 18–23 (18–23 (GAGKTT)) interacts with ATP. Thr22 contributes to the Mg(2+) binding site. 3 residues coordinate substrate: Asp40, Arg64, and Gly86. ATP is bound at residue Arg124. Arg143 serves as a coordination point for substrate. Residue Gln160 participates in ATP binding.

The protein belongs to the shikimate kinase family. Monomer. The cofactor is Mg(2+).

It localises to the cytoplasm. It carries out the reaction shikimate + ATP = 3-phosphoshikimate + ADP + H(+). It participates in metabolic intermediate biosynthesis; chorismate biosynthesis; chorismate from D-erythrose 4-phosphate and phosphoenolpyruvate: step 5/7. In terms of biological role, catalyzes the specific phosphorylation of the 3-hydroxyl group of shikimic acid using ATP as a cosubstrate. This chain is Shikimate kinase, found in Chromobacterium violaceum (strain ATCC 12472 / DSM 30191 / JCM 1249 / CCUG 213 / NBRC 12614 / NCIMB 9131 / NCTC 9757 / MK).